We begin with the raw amino-acid sequence, 118 residues long: V-type proton ATPase subunit G 3 (118 aa).

Over residues methionine 1–leucine 12 the composition is skewed to polar residues. The segment at methionine 1–threonine 44 is disordered. Positions serine 5–lysine 53 form a coiled coil. Residues alanine 14–lysine 26 are compositionally biased toward basic and acidic residues.

The protein belongs to the V-ATPase G subunit family. As to quaternary structure, V-ATPase is a heteromultimeric enzyme made up of two complexes: the ATP-hydrolytic V1 complex and the proton translocation V0 complex. The V1 complex consists of three catalytic AB heterodimers that form a heterohexamer, three peripheral stalks each consisting of EG heterodimers, one central rotor including subunits D and F, and the regulatory subunits C and H. The proton translocation complex V0 consists of the proton transport subunit a, a ring of proteolipid subunits c9c'', rotary subunit d, subunits e and f, and the accessory subunits ATP6AP1/Ac45 and ATP6AP2/PRR. As to expression, kidney.

Its function is as follows. Subunit of the V1 complex of vacuolar(H+)-ATPase (V-ATPase), a multisubunit enzyme composed of a peripheral complex (V1) that hydrolyzes ATP and a membrane integral complex (V0) that translocates protons. V-ATPase is responsible for acidifying and maintaining the pH of intracellular compartments and in some cell types, is targeted to the plasma membrane, where it is responsible for acidifying the extracellular environment. This Mus musculus (Mouse) protein is V-type proton ATPase subunit G 3 (Atp6v1g3).